Consider the following 214-residue polypeptide: MASCAVQLIDKVPKKKVEKKKFEPNILKEPCMKHPLQNRWGLWFYKNDKSKMWQDNLRLITKFDTVEDFWGLYNNIQLPSKLSSGCDYSMFKDGIEPMWEDRSNKCGGRWLITLAKQHRHTELDHFWLETLLCLIGEGFSSFSRDICGSVINIRAKGDKIALWTSNAENCETVTYIGRKYKESLGLPQKLVIGYQAHADTATKSNSITKNKFVV.

MRNA is bound by residues 53 to 54, 99 to 100, 154 to 159, and 202 to 204; these read WQ, WE, RAKGDK, and TKS.

In terms of tissue distribution, ovary, muscle and testis.

The protein localises to the cytoplasm. It localises to the nucleus. Its function is as follows. Does not appear to be a mRNA-cap-binding protein. The polypeptide is Eukaryotic translation initiation factor 4E-1B (Danio rerio (Zebrafish)).